The primary structure comprises 101 residues: Small ribosomal subunit protein eS24 (101 aa).

This sequence belongs to the eukaryotic ribosomal protein eS24 family.

The protein is Small ribosomal subunit protein eS24 of Methanosarcina barkeri (strain Fusaro / DSM 804).